Here is a 2623-residue protein sequence, read N- to C-terminus: Probable polyketide synthase 31 (2623 aa).

Residues 1–11 (MTQNIDNNNNK) are compositionally biased toward low complexity. Residues 1–25 (MTQNIDNNNNKLIRDRNDDDDVDRN) are disordered. Residues 27–461 (DGDVAVIGIG…GSNVCLILSE (435 aa)) enclose the Ketosynthase family 3 (KS3) domain. Active-site for beta-ketoacyl synthase activity residues include Cys199, His338, and His384. The acyl/malonyl transferase stretch occupies residues 666–699 (GVSADIIIGHSLGEVSSPYCSGMIDFQTLCYLIY). Ser676 serves as the catalytic For acyl/malonyl transferase activity. Residues 959-1088 (HEKIKSEGPS…GNFNLTKHNS (130 aa)) form an N-terminal hotdog fold region. The PKS/mFAS DH domain maps to 959 to 1267 (HEKIKSEGPS…CALVSLGSNP (309 aa)). His1000 (proton acceptor; for dehydratase activity) is an active-site residue. Positions 1105–1267 (NFTSISKQDF…CALVSLGSNP (163 aa)) are C-terminal hotdog fold. Residue Asp1177 is the Proton donor; for dehydratase activity of the active site. Residues 2524–2601 (ANNEIIHSTI…QSIEIIKSAK (78 aa)) form the Carrier domain. Ser2561 carries the O-(pantetheine 4'-phosphoryl)serine modification. A disordered region spans residues 2600–2623 (AKNNNKNNNNNNNKNNSNNKNKNN). Low complexity predominate over residues 2601–2623 (KNNNKNNNNNNNKNNSNNKNKNN).

Requires pantetheine 4'-phosphate as cofactor.

In terms of biological role, probable polyketide synthase. The protein is Probable polyketide synthase 31 (pks31) of Dictyostelium discoideum (Social amoeba).